The chain runs to 1699 residues: Eukaryotic translation initiation factor 2-alpha kinase gcn-2 (1699 aa).

An RWD domain is found at 22–138; that stretch reads EEKLALDAVY…HRVREFLTDH (117 aa). 2 consecutive Protein kinase domains span residues 108 to 507 and 508 to 999; these read LTIL…DVVL and VRNK…DEDL. ATP is bound by residues 114–122, lysine 154, 497–505, and lysine 520; these read MADTWEGCV and LGRGGFGDV. 2 disordered regions span residues 572-615 and 632-725; these read DSSL…SLMP and KEWS…SVFE. Over residues 669-706 the composition is skewed to acidic residues; it reads SSDDEDDDDSSEIDWDAESEEVEDEESDDSDEEDEDDG. Residues 711 to 720 are compositionally biased toward polar residues; that stretch reads QLNTETSTGA. Aspartate 829 (proton acceptor) is an active-site residue.

The protein belongs to the protein kinase superfamily. Ser/Thr protein kinase family. GCN2 subfamily.

The enzyme catalyses L-seryl-[protein] + ATP = O-phospho-L-seryl-[protein] + ADP + H(+). The catalysed reaction is L-threonyl-[protein] + ATP = O-phospho-L-threonyl-[protein] + ADP + H(+). In terms of biological role, serine/threonine-protein kinase which phosphorylates the alpha subunit of eukaryotic translation-initiation factor 2 (eIF2alpha), leading to its inactivation and thus to a rapid reduction of translational initiation and repression of global protein synthesis. Involved in the unfolded protein response (UPR) triggered by several stresses including mitochondrial, osmotic and oxidative stresses, amino acid deprivation and UV irradiation, probably by phosphorylating and inhibiting eIF2alpha. In addition, leads to the selective translation/transcription of some mRNA including atf-5, pha-4 and gpdh-1 which are part of the UPR. Required for maintaining lifespan during amino acid starvation. Involved in hypoxia-mediated adaptive protective response. This is Eukaryotic translation initiation factor 2-alpha kinase gcn-2 from Caenorhabditis elegans.